The sequence spans 458 residues: IASVVFKAGVKDYRLTYYTPEYETKDTDILAAFRVTPQPGVPAEEAGAAVAAESSTGTWTTVWTDGLTNLDRYKGRCYHIEAXVGEENQYIAYVAYPLDLFEEGSVTNMFTSIVGNVFGFKALRALRLEDLRIPTAYSKTFQGPPHGIQVERDKLNKYGRPLLGCTIKPKLGLSAKNYGRAVYECLRGGLDFTKDDENVNSQPFMRWRDRFVFCAEAIYKAQAETGEIKGHYLNATAGTCEEMMKRAAFARELGVPIVMHDYLTGGFTANTTLAHYCRDNGLLLHIHRAMHAVIDRQKNHGMHFRVLAKALRMSGGDHIHAGTVVGKLEGEREMTLGFVDLLRDDYIEKDRSRGIFFTQDWVSMPGVLPVASGGIHVWHMPALTEIFGDDSVLQFGGGTLGHPWGNAPGAVANRVALEACVQARNEGRDLAREGNEIIREACNWSPGLAAACEVWKEI.

K7 carries the post-translational modification N6,N6,N6-trimethyllysine. Substrate is bound by residues N116 and T166. Catalysis depends on K168, which acts as the Proton acceptor. K170 lines the substrate pocket. Residues K194, D196, and E197 each coordinate Mg(2+). Position 194 is an N6-carboxylysine (K194). H287 (proton acceptor) is an active-site residue. Positions 288, 320, and 372 each coordinate substrate.

It belongs to the RuBisCO large chain family. Type I subfamily. In terms of assembly, heterohexadecamer of 8 large chains and 8 small chains; disulfide-linked. The disulfide link is formed within the large subunit homodimers. The cofactor is Mg(2+). In terms of processing, the disulfide bond which can form in the large chain dimeric partners within the hexadecamer appears to be associated with oxidative stress and protein turnover.

The protein resides in the plastid. The protein localises to the chloroplast. It carries out the reaction 2 (2R)-3-phosphoglycerate + 2 H(+) = D-ribulose 1,5-bisphosphate + CO2 + H2O. It catalyses the reaction D-ribulose 1,5-bisphosphate + O2 = 2-phosphoglycolate + (2R)-3-phosphoglycerate + 2 H(+). Functionally, ruBisCO catalyzes two reactions: the carboxylation of D-ribulose 1,5-bisphosphate, the primary event in carbon dioxide fixation, as well as the oxidative fragmentation of the pentose substrate in the photorespiration process. Both reactions occur simultaneously and in competition at the same active site. This chain is Ribulose bisphosphate carboxylase large chain, found in Gladiolus gueinzii (Coastal gladiolus).